Consider the following 75-residue polypeptide: Exodeoxyribonuclease 7 small subunit (75 aa).

Belongs to the XseB family. Heterooligomer composed of large and small subunits.

The protein resides in the cytoplasm. It carries out the reaction Exonucleolytic cleavage in either 5'- to 3'- or 3'- to 5'-direction to yield nucleoside 5'-phosphates.. Functionally, bidirectionally degrades single-stranded DNA into large acid-insoluble oligonucleotides, which are then degraded further into small acid-soluble oligonucleotides. This is Exodeoxyribonuclease 7 small subunit from Chlamydia abortus (strain DSM 27085 / S26/3) (Chlamydophila abortus).